Here is a 95-residue protein sequence, read N- to C-terminus: Small ribosomal subunit protein bS16 (95 aa).

Belongs to the bacterial ribosomal protein bS16 family.

The chain is Small ribosomal subunit protein bS16 from Roseiflexus sp. (strain RS-1).